Here is an 883-residue protein sequence, read N- to C-terminus: Phosphoenolpyruvate carboxylase (883 aa).

Residues histidine 138 and lysine 546 contribute to the active site.

The protein belongs to the PEPCase type 1 family. Mg(2+) is required as a cofactor.

The catalysed reaction is oxaloacetate + phosphate = phosphoenolpyruvate + hydrogencarbonate. Functionally, forms oxaloacetate, a four-carbon dicarboxylic acid source for the tricarboxylic acid cycle. The protein is Phosphoenolpyruvate carboxylase of Salmonella schwarzengrund (strain CVM19633).